We begin with the raw amino-acid sequence, 394 residues long: Protein TsgA homolog (394 aa).

12 consecutive transmembrane segments (helical) span residues 11-31 (WISY…GIVM), 51-71 (FLNA…EIIP), 76-96 (LVFG…GHNL), 101-121 (ISMF…TFLV), 134-154 (LLFT…AAAM), 162-182 (WYWV…LTLC), 206-226 (VGVL…LGFI), 246-266 (QLVS…SFIL), 274-294 (IVTV…STDN), 302-322 (ILAL…LGSL), 334-354 (FILT…GPIV), and 363-383 (LETA…LGFF).

The protein belongs to the major facilitator superfamily. TsgA family.

The protein localises to the cell inner membrane. This is Protein TsgA homolog from Yersinia pestis bv. Antiqua (strain Antiqua).